The primary structure comprises 203 residues: Urease accessory protein UreG (203 aa).

12–19 (GPVGSGKT) lines the GTP pocket.

This sequence belongs to the SIMIBI class G3E GTPase family. UreG subfamily. As to quaternary structure, homodimer. UreD, UreF and UreG form a complex that acts as a GTP-hydrolysis-dependent molecular chaperone, activating the urease apoprotein by helping to assemble the nickel containing metallocenter of UreC. The UreE protein probably delivers the nickel.

It is found in the cytoplasm. Its function is as follows. Facilitates the functional incorporation of the urease nickel metallocenter. This process requires GTP hydrolysis, probably effectuated by UreG. This Alteromonas mediterranea (strain DSM 17117 / CIP 110805 / LMG 28347 / Deep ecotype) protein is Urease accessory protein UreG.